We begin with the raw amino-acid sequence, 220 residues long: Ribose-5-phosphate isomerase A (220 aa).

Substrate-binding positions include 25 to 28, 80 to 83, and 93 to 96; these read TGST, DGAD, and KGGG. The active-site Proton acceptor is E102. K120 provides a ligand contact to substrate.

It belongs to the ribose 5-phosphate isomerase family. Homodimer.

The catalysed reaction is aldehydo-D-ribose 5-phosphate = D-ribulose 5-phosphate. It participates in carbohydrate degradation; pentose phosphate pathway; D-ribose 5-phosphate from D-ribulose 5-phosphate (non-oxidative stage): step 1/1. Catalyzes the reversible conversion of ribose-5-phosphate to ribulose 5-phosphate. This Bacillus cereus (strain ATCC 14579 / DSM 31 / CCUG 7414 / JCM 2152 / NBRC 15305 / NCIMB 9373 / NCTC 2599 / NRRL B-3711) protein is Ribose-5-phosphate isomerase A.